We begin with the raw amino-acid sequence, 302 residues long: Pyridoxal 5'-phosphate synthase subunit PdxS (302 aa).

A D-ribose 5-phosphate-binding site is contributed by aspartate 32. Lysine 89 functions as the Schiff-base intermediate with D-ribose 5-phosphate in the catalytic mechanism. Glycine 161 provides a ligand contact to D-ribose 5-phosphate. D-glyceraldehyde 3-phosphate is bound at residue arginine 173. D-ribose 5-phosphate is bound by residues glycine 222 and 243 to 244 (GS). The interval 276–302 (ASNPGKGMKGEANADLSEGEKLQTRGV) is disordered. The span at 293–302 (EGEKLQTRGV) shows a compositional bias: basic and acidic residues.

It belongs to the PdxS/SNZ family. In the presence of PdxT, forms a dodecamer of heterodimers.

It catalyses the reaction aldehydo-D-ribose 5-phosphate + D-glyceraldehyde 3-phosphate + L-glutamine = pyridoxal 5'-phosphate + L-glutamate + phosphate + 3 H2O + H(+). It functions in the pathway cofactor biosynthesis; pyridoxal 5'-phosphate biosynthesis. Its function is as follows. Catalyzes the formation of pyridoxal 5'-phosphate from ribose 5-phosphate (RBP), glyceraldehyde 3-phosphate (G3P) and ammonia. The ammonia is provided by the PdxT subunit. Can also use ribulose 5-phosphate and dihydroxyacetone phosphate as substrates, resulting from enzyme-catalyzed isomerization of RBP and G3P, respectively. This chain is Pyridoxal 5'-phosphate synthase subunit PdxS, found in Haloquadratum walsbyi (strain DSM 16790 / HBSQ001).